A 675-amino-acid chain; its full sequence is Methionine--tRNA ligase (675 aa).

Residues 12-22 (PYANGPIHLGH) carry the 'HIGH' region motif. Residues cysteine 143, cysteine 146, cysteine 156, and cysteine 159 each coordinate Zn(2+). The 'KMSKS' region signature appears at 328–332 (KMSKS). Residue lysine 331 participates in ATP binding. One can recognise a tRNA-binding domain in the interval 574–675 (DFAKVDLRIA…QGAQPGMRVK (102 aa)).

This sequence belongs to the class-I aminoacyl-tRNA synthetase family. MetG type 1 subfamily. Homodimer. It depends on Zn(2+) as a cofactor.

The protein localises to the cytoplasm. It carries out the reaction tRNA(Met) + L-methionine + ATP = L-methionyl-tRNA(Met) + AMP + diphosphate. Its function is as follows. Is required not only for elongation of protein synthesis but also for the initiation of all mRNA translation through initiator tRNA(fMet) aminoacylation. This chain is Methionine--tRNA ligase, found in Alkalilimnicola ehrlichii (strain ATCC BAA-1101 / DSM 17681 / MLHE-1).